A 566-amino-acid polypeptide reads, in one-letter code: Interleukin-1 receptor-like 1 (566 aa).

The N-terminal stretch at 1–26 is a signal peptide; sequence MIGKWRMGLWALAILTVPMYFIVTEG. Ig-like C2-type domains lie at 27-109, 120-207, and 217-323; these read RKTS…LNVT, PDYM…RSFT, and PVIT…VRLR. Residues 27–331 are Extracellular-facing; sequence RKTSWGLENE…LRRKQPIDHQ (305 aa). The cysteines at positions 42 and 93 are disulfide-linked. Asn-107, Asn-146, and Asn-194 each carry an N-linked (GlcNAc...) asparagine glycan. 2 disulfide bridges follow: Cys-117/Cys-157 and Cys-139/Cys-187. The flexible linker stretch occupies residues 204-216; that stretch reads RSFTVEEKGFSTF. N-linked (GlcNAc...) asparagine glycans are attached at residues Asn-225, Asn-258, and Asn-277. 2 disulfides stabilise this stretch: Cys-240-Cys-307 and Cys-243-Cys-286. Residue Lys-325 forms a Glycyl lysine isopeptide (Lys-Gly) (interchain with G-Cter in ubiquitin) linkage. Residues 332–354 traverse the membrane as a helical segment; the sequence is STYYIVAGCSLLLMFINVLVIVL. The Cytoplasmic segment spans residues 355-566; it reads KVFWIEVALF…GKVCLDLKHF (212 aa). In terms of domain architecture, TIR spans 379–539; sequence KLYDAYIIYP…KFWKHVRYQM (161 aa). Phosphoserine is present on Ser-441. Glu-465 is an active-site residue.

This sequence belongs to the interleukin-1 receptor family. Interacts with MYD88, IRAK1, IRAK4, and TRAF6. Bound to its ligand IL-33, interacts with IL1RAP to form the minimal interleukin-33 signaling complex with a 1:1:1 stoichiometry. Interacts with KIT (bound to KITLG/SCF). A mast cell-specific KITLG/SCF-induced interleukin-33 signaling complex contains IL1RL1, IL1RAP, KIT and MYD88. Interacts with TMED1. In terms of processing, phosphorylated by GSK3B at Ser-441; leading to proteasomal degradation. Post-translationally, ubiquitinated at Lys-325 in a FBXL19-mediated manner; leading to proteasomal degradation. Ubiquitination by TRAF6 via 'Lys-27'-linked polyubiquitination and deubiquitination by USP38 serves as a critical regulatory mechanism for fine-tuning IL1RL1-mediated inflammatory response. Isoform A is detected in spleen, lung, bone marrow and lymh node. Isoform B is predominant in fibroblasts.

It localises to the cell membrane. The protein resides in the secreted. The enzyme catalyses NAD(+) + H2O = ADP-D-ribose + nicotinamide + H(+). In terms of biological role, receptor for interleukin-33 (IL-33) which plays crucial roles in innate and adaptive immunity, contributing to tissue homeostasis and responses to environmental stresses together with coreceptor IL1RAP. Its stimulation recruits MYD88, IRAK1, IRAK4, and TRAF6, followed by phosphorylation of MAPK3/ERK1 and/or MAPK1/ERK2, MAPK14, and MAPK8. Possibly involved in helper T-cell function. Upon tissue injury, induces UCP2-dependent mitochondrial rewiring that attenuates the generation of reactive oxygen species and preserves the integrity of Krebs cycle required for persistent production of itaconate and subsequent GATA3-dependent differentiation of inflammation-resolving alternatively activated macrophages. Functionally, inhibits IL-33 signaling. This chain is Interleukin-1 receptor-like 1 (Il1rl1), found in Rattus norvegicus (Rat).